Consider the following 249-residue polypeptide: Triosephosphate isomerase (249 aa).

Positions 10 and 12 each coordinate substrate. The active-site Electrophile is His94. Glu166 serves as the catalytic Proton acceptor.

It belongs to the triosephosphate isomerase family. Homodimer.

The enzyme catalyses D-glyceraldehyde 3-phosphate = dihydroxyacetone phosphate. The protein operates within carbohydrate biosynthesis; gluconeogenesis. It participates in carbohydrate degradation; glycolysis; D-glyceraldehyde 3-phosphate from glycerone phosphate: step 1/1. The sequence is that of Triosephosphate isomerase (tpiA) from Emericella nidulans (strain FGSC A4 / ATCC 38163 / CBS 112.46 / NRRL 194 / M139) (Aspergillus nidulans).